The following is a 401-amino-acid chain: Tyrosine--tRNA ligase (401 aa).

Positions 43-52 (PTAPDLHLGH) match the 'HIGH' region motif. Residues 227–231 (KMSKS) carry the 'KMSKS' region motif. Position 230 (Lys230) interacts with ATP. In terms of domain architecture, S4 RNA-binding spans 338–399 (MAIGNVLKEA…GKRRFAKINL (62 aa)).

Belongs to the class-I aminoacyl-tRNA synthetase family. TyrS type 2 subfamily. In terms of assembly, homodimer.

The protein resides in the cytoplasm. It carries out the reaction tRNA(Tyr) + L-tyrosine + ATP = L-tyrosyl-tRNA(Tyr) + AMP + diphosphate + H(+). Functionally, catalyzes the attachment of tyrosine to tRNA(Tyr) in a two-step reaction: tyrosine is first activated by ATP to form Tyr-AMP and then transferred to the acceptor end of tRNA(Tyr). The sequence is that of Tyrosine--tRNA ligase from Idiomarina loihiensis (strain ATCC BAA-735 / DSM 15497 / L2-TR).